Consider the following 268-residue polypeptide: Early nodulin-20 (268 aa).

Positions 1 to 24 (MSSSSPILLMFIFSIWMLISYSES) are cleaved as a signal peptide. In terms of domain architecture, Phytocyanin spans 25–129 (TDYLVGDSEN…GLKLAVVVMV (105 aa)). A glycan (N-linked (GlcNAc...) asparagine) is linked at Asn67. A disulfide bridge links Cys83 with Cys117. 2 stretches are compositionally biased toward pro residues: residues 134–145 (SSPPPPPSPPTP) and 160–185 (PSPPSPSPSPSPSPSPSPSPRSTPIP). The tract at residues 134-253 (SSPPPPPSPP…SGSKGGGAGH (120 aa)) is disordered. Over residues 199–235 (PSLSKSPSPSESPSLAPSPSDSVASLAPSSSPSDESP) the composition is skewed to low complexity. The GPI-anchor amidated serine moiety is linked to residue Ser243. The propeptide at 244-268 (SGSKGGGAGHGFLEVSIAMMMFLIF) is removed in mature form.

Belongs to the early nodulin-like (ENODL) family.

It localises to the cell membrane. May act as a carbohydrate transporter. The sequence is that of Early nodulin-20 from Medicago truncatula (Barrel medic).